A 52-amino-acid polypeptide reads, in one-letter code: uncharacterized protein (52 aa).

The disordered stretch occupies residues 1 to 52; it reads MSLRPCLTPSSMQYSDIYIPTPTPTHHTHTPTPHPHPHTHTHTHHNPNPTLF. Over residues 35 to 45 the composition is skewed to basic residues; sequence PHPHTHTHTHH.

This is an uncharacterized protein from Saccharomyces cerevisiae (strain ATCC 204508 / S288c) (Baker's yeast).